A 150-amino-acid chain; its full sequence is 3-dehydroquinate dehydratase (150 aa).

The Proton acceptor role is filled by tyrosine 26. Residues asparagine 75, histidine 81, and aspartate 88 each coordinate substrate. Residue histidine 101 is the Proton donor of the active site. Substrate contacts are provided by residues 102–103 (LS) and arginine 112.

Belongs to the type-II 3-dehydroquinase family. In terms of assembly, homododecamer.

It catalyses the reaction 3-dehydroquinate = 3-dehydroshikimate + H2O. It functions in the pathway metabolic intermediate biosynthesis; chorismate biosynthesis; chorismate from D-erythrose 4-phosphate and phosphoenolpyruvate: step 3/7. Functionally, catalyzes a trans-dehydration via an enolate intermediate. This chain is 3-dehydroquinate dehydratase, found in Shewanella loihica (strain ATCC BAA-1088 / PV-4).